A 379-amino-acid chain; its full sequence is tRNA (guanine(26)-N(2))-dimethyltransferase (379 aa).

The segment at 1-26 (MECREITEGSTTFTAPVQDETTQFPP) is disordered. Positions 4-369 (REITEGSTTF…APLPLIEEKI (366 aa)) constitute a Trm1 methyltransferase domain. The span at 8 to 25 (EGSTTFTAPVQDETTQFP) shows a compositional bias: polar residues. 5 residues coordinate S-adenosyl-L-methionine: Arg41, Arg66, Asp82, Asp108, and Ala109. Cys237, Cys240, Cys257, and Cys260 together coordinate Zn(2+).

The protein belongs to the class I-like SAM-binding methyltransferase superfamily. Trm1 family.

The catalysed reaction is guanosine(26) in tRNA + 2 S-adenosyl-L-methionine = N(2)-dimethylguanosine(26) in tRNA + 2 S-adenosyl-L-homocysteine + 2 H(+). Functionally, dimethylates a single guanine residue at position 26 of a number of tRNAs using S-adenosyl-L-methionine as donor of the methyl groups. The polypeptide is tRNA (guanine(26)-N(2))-dimethyltransferase (Methanocorpusculum labreanum (strain ATCC 43576 / DSM 4855 / Z)).